The following is a 335-amino-acid chain: DNA-directed RNA polymerase subunit alpha (335 aa).

Positions 1 to 233 (MMLNATEFLT…QQISIFVDLE (233 aa)) are alpha N-terminal domain (alpha-NTD). Residues 247 to 335 (VDPVLLRPVD…VDDRFSYRSR (89 aa)) are alpha C-terminal domain (alpha-CTD).

This sequence belongs to the RNA polymerase alpha chain family. In terms of assembly, homodimer. The RNAP catalytic core consists of 2 alpha, 1 beta, 1 beta' and 1 omega subunit. When a sigma factor is associated with the core the holoenzyme is formed, which can initiate transcription.

It carries out the reaction RNA(n) + a ribonucleoside 5'-triphosphate = RNA(n+1) + diphosphate. In terms of biological role, DNA-dependent RNA polymerase catalyzes the transcription of DNA into RNA using the four ribonucleoside triphosphates as substrates. In Psychrobacter arcticus (strain DSM 17307 / VKM B-2377 / 273-4), this protein is DNA-directed RNA polymerase subunit alpha.